The primary structure comprises 194 residues: Protein GrpE (194 aa).

The span at 1 to 12 (MNKQKNNRERTP) shows a compositional bias: basic and acidic residues. The tract at residues 1-44 (MNKQKNNRERTPQPEQDTERDEQLTNSHENDIDSAPAAEENDKV) is disordered.

Belongs to the GrpE family. As to quaternary structure, homodimer.

Its subcellular location is the cytoplasm. Participates actively in the response to hyperosmotic and heat shock by preventing the aggregation of stress-denatured proteins, in association with DnaK and GrpE. It is the nucleotide exchange factor for DnaK and may function as a thermosensor. Unfolded proteins bind initially to DnaJ; upon interaction with the DnaJ-bound protein, DnaK hydrolyzes its bound ATP, resulting in the formation of a stable complex. GrpE releases ADP from DnaK; ATP binding to DnaK triggers the release of the substrate protein, thus completing the reaction cycle. Several rounds of ATP-dependent interactions between DnaJ, DnaK and GrpE are required for fully efficient folding. The polypeptide is Protein GrpE (Porphyromonas gingivalis (strain ATCC BAA-308 / W83)).